We begin with the raw amino-acid sequence, 141 residues long: Hemoglobin subunit alpha-A/Q/R/T (141 aa).

The Globin domain occupies 1-141 (VLSPADKTNV…VSTVLTSKYR (141 aa)). Ser3 carries the phosphoserine modification. Position 7 is an N6-succinyllysine (Lys7). Residue Thr8 is modified to Phosphothreonine. Residue Lys11 is modified to N6-succinyllysine. N6-acetyllysine; alternate is present on Lys16. At Lys16 the chain carries N6-succinyllysine; alternate. Tyr24 bears the Phosphotyrosine mark. Ser35 is subject to Phosphoserine. Lys40 is subject to N6-succinyllysine. Position 49 is a phosphoserine (Ser49). His58 is an O2 binding site. His87 contacts heme b. Ser102 is modified (phosphoserine). Thr108 carries the phosphothreonine modification. A phosphoserine mark is found at Ser124 and Ser131. Thr134 and Thr137 each carry phosphothreonine. The residue at position 138 (Ser138) is a Phosphoserine.

This sequence belongs to the globin family. As to quaternary structure, heterotetramer of two alpha chains and two beta chains. In terms of tissue distribution, red blood cells.

Involved in oxygen transport from the lung to the various peripheral tissues. This chain is Hemoglobin subunit alpha-A/Q/R/T, found in Macaca fascicularis (Crab-eating macaque).